The sequence spans 214 residues: UBX domain-containing protein 10 (214 aa).

Over residues methionine 1–serine 13 the composition is skewed to basic residues. The interval methionine 1 to valine 79 is disordered. Residues methionine 16–threonine 25 are compositionally biased toward polar residues. The segment covering serine 49–serine 60 has biased composition (low complexity). A UBX domain is found at proline 127–isoleucine 204.

This sequence belongs to the UBXN10 family.

Its subcellular location is the cell projection. The protein localises to the cilium. In terms of biological role, required for ciliogenesis. Acts as a tethering factor that facilitates recruitment of vcp/p97 to the intraflagellar transport complex B (IFT-B) in cilia. This chain is UBX domain-containing protein 10, found in Danio rerio (Zebrafish).